The primary structure comprises 637 residues: Probable potassium transport system protein Kup 2 (637 aa).

The tract at residues 1-21 is disordered; that stretch reads MDLASRDSEAETVEQSSHSGA. 12 helical membrane-spanning segments follow: residues 29-49, 68-88, 116-136, 150-170, 180-200, 228-248, 258-278, 300-320, 359-379, 381-401, 409-429, and 434-454; these read LMLG…IYAF, VLSL…VAFV, LILA…IITP, VTPT…AILF, VAAV…VAGL, AAFV…ALYV, IVLA…FGQG, ALMP…QAVI, LLVA…SSLA, AYGI…FVVM, LAVA…FFLA, and IFEG…IMWT.

The protein belongs to the HAK/KUP transporter (TC 2.A.72) family.

It is found in the cell inner membrane. It carries out the reaction K(+)(in) + H(+)(in) = K(+)(out) + H(+)(out). Its function is as follows. Transport of potassium into the cell. Likely operates as a K(+):H(+) symporter. This Mesorhizobium japonicum (strain LMG 29417 / CECT 9101 / MAFF 303099) (Mesorhizobium loti (strain MAFF 303099)) protein is Probable potassium transport system protein Kup 2.